The chain runs to 355 residues: tRNA pseudouridine synthase D (355 aa).

The active-site Nucleophile is the D84. The TRUD domain occupies 160–306 (GVPNYFGLQR…MAHERRILRL (147 aa)).

Belongs to the pseudouridine synthase TruD family.

The enzyme catalyses uridine(13) in tRNA = pseudouridine(13) in tRNA. Responsible for synthesis of pseudouridine from uracil-13 in transfer RNAs. The sequence is that of tRNA pseudouridine synthase D from Pseudomonas aeruginosa (strain LESB58).